Consider the following 383-residue polypeptide: Hydroxymethylglutaryl-CoA synthase (383 aa).

Asp-29 lines the (3S)-3-hydroxy-3-methylglutaryl-CoA pocket. The active-site Proton donor/acceptor is the Glu-79. Residues Cys-111, Thr-152, Ser-201, His-233, Lys-242, Asn-275, and Ser-308 each coordinate (3S)-3-hydroxy-3-methylglutaryl-CoA. Cys-111 functions as the Acyl-thioester intermediate in the catalytic mechanism. His-233 (proton donor/acceptor) is an active-site residue.

It belongs to the thiolase-like superfamily. HMG-CoA synthase family. Homodimer.

It carries out the reaction acetoacetyl-CoA + acetyl-CoA + H2O = (3S)-3-hydroxy-3-methylglutaryl-CoA + CoA + H(+). It participates in metabolic intermediate biosynthesis; (R)-mevalonate biosynthesis; (R)-mevalonate from acetyl-CoA: step 2/3. With respect to regulation, is sensitive to feedback substrate inhibition by acetoacetyl-CoA. Is inactivated by hymeglusin, which also blocks the growth of E.faecalis, indicating the critical role that the mevalonate pathway plays in isoprenoid biosynthesis. In terms of biological role, catalyzes the condensation of acetyl-CoA with acetoacetyl-CoA to form 3-hydroxy-3-methylglutaryl-CoA (HMG-CoA). Functions in the mevalonate (MVA) pathway leading to isopentenyl diphosphate (IPP), a key precursor for the biosynthesis of isoprenoid compounds. The sequence is that of Hydroxymethylglutaryl-CoA synthase (mvaS) from Enterococcus faecalis (Streptococcus faecalis).